The sequence spans 296 residues: Polyadenylate-binding protein 2-A (296 aa).

Residues 1–106 form a disordered region; it reads MAAVSSVASL…GELTGDQTIE (106 aa). Over residues 71–82 the composition is skewed to gly residues; it reads GRGGSGGGGAGG. Residues 84–97 show a composition bias toward acidic residues; it reads EELEDEELEEEEPG. A coiled-coil region spans residues 107 to 141; the sequence is DPELEAIKARVREMEEEAEKLKELQNEVEKQMNMS. The tract at residues 146–296 is necessary for homooligomerization; it reads NAGPVIMSVE…ARATSWYTPY (151 aa). Residues 163-240 form the RRM domain; it reads RSIYVGNVDY…RQIKVVPKRT (78 aa).

As to quaternary structure, monomer and homooligomer. Binds RNA as a monomer and oligomerizes when bound to poly(A). In terms of tissue distribution, shows dynamic spatial expression throughout development. First expressed in the animal pole region of the egg and this pattern persists through to the blastula stage. In gastrula and neurula embryos, expressed mainly in ectodermal, neural and epidermal regions. Neural tissue-specific expression pattern persists into tailbud stage when expression is localized to the brain and spinal cord. At early tadpole stage, expression becomes gradually confined to the specific vesicle regions of the developing brain. At stage 39, expressed in the telencephalon and mesencephalon regions of the brain. Also detected in the eye and olfactory pit at the tadpole stage. Expressed during gut endoderm development. At stage 35, expressed exclusively in the anterior portion of the gut endoderm, which includes the prospective liver, stomach and pancreas. As development proceeds, expression becomes restricted to the pancreas, and by stage 46/47 (the seventh day of development) expression is localized exclusively to the pancreas. Expressed in most adult tissues.

The protein resides in the nucleus. It is found in the cytoplasm. Involved in the 3'-end formation of mRNA precursors (pre-mRNA) by the addition of a poly(A) tail of 200-250 nt to the upstream cleavage product. Stimulates poly(A) polymerase (PAPOLA) conferring processivity on the poly(A) tail elongation reaction and also controls the poly(A) tail length. Increases the affinity of poly(A) polymerase for RNA. Binds to poly(A) and to poly(G) with high affinity. May protect the poly(A) tail from degradation. This chain is Polyadenylate-binding protein 2-A (pabpn1-a), found in Xenopus laevis (African clawed frog).